We begin with the raw amino-acid sequence, 211 residues long: Arginine exporter protein ArgO (211 aa).

6 helical membrane-spanning segments follow: residues 1 to 21 (MISY…PLGP), 37 to 57 (LMIA…GIFG), 68 to 88 (LLAL…FGAL), 111 to 131 (IIAT…DTFV), 147 to 167 (WFAL…ALLA), and 179 to 199 (AQRI…FQLA).

Belongs to the LysE/ArgO transporter (TC 2.A.75) family.

The protein localises to the cell inner membrane. The enzyme catalyses L-arginine(in) = L-arginine(out). In terms of biological role, involved in the export of arginine. Important to control the intracellular level of arginine and the correct balance between arginine and lysine. This Salmonella schwarzengrund (strain CVM19633) protein is Arginine exporter protein ArgO.